The following is a 168-amino-acid chain: 6,7-dimethyl-8-ribityllumazine synthase (168 aa).

5-amino-6-(D-ribitylamino)uracil is bound by residues Phe24, 58–60 (ALE), and 82–84 (AVI). (2S)-2-hydroxy-3-oxobutyl phosphate is bound at residue 87-88 (ET). His90 acts as the Proton donor in catalysis. A 5-amino-6-(D-ribitylamino)uracil-binding site is contributed by Asn115. A (2S)-2-hydroxy-3-oxobutyl phosphate-binding site is contributed by Arg129.

Belongs to the DMRL synthase family.

The enzyme catalyses (2S)-2-hydroxy-3-oxobutyl phosphate + 5-amino-6-(D-ribitylamino)uracil = 6,7-dimethyl-8-(1-D-ribityl)lumazine + phosphate + 2 H2O + H(+). It functions in the pathway cofactor biosynthesis; riboflavin biosynthesis; riboflavin from 2-hydroxy-3-oxobutyl phosphate and 5-amino-6-(D-ribitylamino)uracil: step 1/2. Catalyzes the formation of 6,7-dimethyl-8-ribityllumazine by condensation of 5-amino-6-(D-ribitylamino)uracil with 3,4-dihydroxy-2-butanone 4-phosphate. This is the penultimate step in the biosynthesis of riboflavin. In Paraburkholderia phytofirmans (strain DSM 17436 / LMG 22146 / PsJN) (Burkholderia phytofirmans), this protein is 6,7-dimethyl-8-ribityllumazine synthase.